The following is a 21-amino-acid chain: DYE-linked aldehyde dehydrogenase, gamma chain (21 aa).

Heterotetramer composed of an alpha, a beta and two gamma chains. Requires [2Fe-2S] cluster as cofactor.

Its function is as follows. Active with aldehydes and formate esters as substrates. The sequence is that of DYE-linked aldehyde dehydrogenase, gamma chain from Amycolatopsis methanolica.